A 1188-amino-acid chain; its full sequence is Oxysterol-binding protein homolog 1 (1188 aa).

ANK repeat units follow at residues 51–80 (VLHLMLHYAVQVAPMAVIKEIVHHWVSTTN), 96–125 (NGNTPLHIAAYQSRGDIVAFLLDQPTINDC), and 196–225 (TGDTVLHEFVKKRDVIMCRWLLEHGADPFK). Residues 330-379 (MSSCSLHLDSSEKLKFEIIGGNNGVIRWHLKGNHPIETNRWVWAIQGAIR) enclose the PH domain. Ser394 is modified (phosphoserine). Disordered stretches follow at residues 415–546 (ATSK…GDED) and 661–692 (QKKLNNQPQVETEANEESDDANSMIKGSQEST). Positions 424–433 (PHLSKSTLTQ) are enriched in polar residues. Over residues 443–462 (TNNNNNKSNNDYDDNNNNNN) the composition is skewed to low complexity. Residues 463–473 (NDDDDYDDDDE) show a composition bias toward acidic residues. Residues Ser490 and Ser500 each carry the phosphoserine modification. The segment covering 514 to 529 (PSDDEGYSEDDSDDDG) has biased composition (acidic residues). 3 positions are modified to phosphoserine: Ser678, Ser683, and Ser691. 2 positions are modified to phosphothreonine: Thr692 and Thr694. A phosphoserine mark is found at Ser708 and Ser712. The FFAT signature appears at 716–722 (EFFDAEE). Residues 721–755 (EEAASDKKANDSEDLTTNKETPANAKPQEEAPEDE) are disordered. Residues 800-1174 (LWSVLKSMVG…YWKFNGEYWN (375 aa)) are OSBP-related domain (ORD). The ergosterol site is built by Asp834 and Lys962.

Belongs to the OSBP family. Interacts with NVJ1. Interacts with the AAA ATPase AFG2; regulates OSH1 membrane association. AFG2 is required for membrane dissociation of OSH1. Interacts with SCS2.

It is found in the golgi apparatus membrane. The protein resides in the nucleus outer membrane. The protein localises to the endoplasmic reticulum membrane. Its subcellular location is the vacuole membrane. Its function is as follows. Lipid transport protein (LTP) involved in non-vesicular transfer of lipids between membranes. Functions in phosphoinositide-coupled directional transport of various lipids by carrying the lipid molecule in a hydrophobic pocket and transferring it between membranes through the cytosol. Involved in maintenance of intracellular sterol distribution and homeostasis. Involved in non-vesicular transport of ergosterol and PI(4)P at the NVJ. Binds sterol and PI4P in a mutually exclusive manner. May be involved in formation of PMN vesicles by altering the membrane lipid composition. This is Oxysterol-binding protein homolog 1 from Saccharomyces cerevisiae (strain ATCC 204508 / S288c) (Baker's yeast).